Reading from the N-terminus, the 544-residue chain is Chaperonin GroEL (544 aa).

ATP is bound by residues 30-33 (TLGP), K51, 87-91 (DGTTT), G415, and D495.

Belongs to the chaperonin (HSP60) family. As to quaternary structure, forms a cylinder of 14 subunits composed of two heptameric rings stacked back-to-back. Interacts with the co-chaperonin GroES.

The protein resides in the cytoplasm. The enzyme catalyses ATP + H2O + a folded polypeptide = ADP + phosphate + an unfolded polypeptide.. Functionally, together with its co-chaperonin GroES, plays an essential role in assisting protein folding. The GroEL-GroES system forms a nano-cage that allows encapsulation of the non-native substrate proteins and provides a physical environment optimized to promote and accelerate protein folding. The protein is Chaperonin GroEL of Neisseria flavescens.